We begin with the raw amino-acid sequence, 521 residues long: MIKQALISVSDKTGIVDFAKSLSDLGVKLLSTGGTAKLLADAGLPVTEVADYTGFPEMLDGRVKTLHPKVHGGILARRDLPEHMQALEAHDIPTIDLLVVNLYPFVATIAKDDCTLADAIENIDIGGPTMLRSAAKNHRDVTVIVDPADYAVVLDEMKANGNTVGYATNFRLATKVFAHTAQYDGAITNYLTSLTDELKHGSRNPYPATLNMAFEKVQDLRYGENPHQSAAFYRDIVTPAGALANYRQLQGKELSYNNIADSDAAWECVKTFDAPACVIIKHANPCGVAVGNDSADAYAKAFQTDPTSAFGGIIAFNREVDEAAAQAVAKQFVEVLIAPSFTDAAKQVFAAKQNVRLLEIALGEGHNAFDLKRVGGGLLVQSLDAKNVQPHELRVVTKRHPTPKEMDDLLFAWRVAKYVKSNAIVFCGNGMTLGVGAGQMSRVDSARIASIKAQNAGLTLAGSAVASDAFFPFRDGLDVVVAAGATCVIQPGGSVRDDEVIAAADEHNIAMILTGVRHFRH.

Residues 1–145 (MIKQALISVS…KNHRDVTVIV (145 aa)) form the MGS-like domain.

This sequence belongs to the PurH family.

The enzyme catalyses (6R)-10-formyltetrahydrofolate + 5-amino-1-(5-phospho-beta-D-ribosyl)imidazole-4-carboxamide = 5-formamido-1-(5-phospho-D-ribosyl)imidazole-4-carboxamide + (6S)-5,6,7,8-tetrahydrofolate. It catalyses the reaction IMP + H2O = 5-formamido-1-(5-phospho-D-ribosyl)imidazole-4-carboxamide. The protein operates within purine metabolism; IMP biosynthesis via de novo pathway; 5-formamido-1-(5-phospho-D-ribosyl)imidazole-4-carboxamide from 5-amino-1-(5-phospho-D-ribosyl)imidazole-4-carboxamide (10-formyl THF route): step 1/1. It functions in the pathway purine metabolism; IMP biosynthesis via de novo pathway; IMP from 5-formamido-1-(5-phospho-D-ribosyl)imidazole-4-carboxamide: step 1/1. The sequence is that of Bifunctional purine biosynthesis protein PurH from Burkholderia multivorans (strain ATCC 17616 / 249).